Reading from the N-terminus, the 533-residue chain is uncharacterized protein (533 aa).

The signal sequence occupies residues methionine 1 to alanine 21. Cysteine 22 is lipidated: N-palmitoyl cysteine. A lipid anchor (S-diacylglycerol cysteine) is attached at cysteine 22. The interval leucine 91 to threonine 111 is disordered. Residues glycine 97–threonine 111 show a composition bias toward polar residues.

This sequence belongs to the MG067/MG068/MG395 family.

The protein resides in the cell membrane. This is an uncharacterized protein from Mycoplasma pneumoniae (strain ATCC 29342 / M129 / Subtype 1) (Mycoplasmoides pneumoniae).